A 311-amino-acid polypeptide reads, in one-letter code: Aspartate carbamoyltransferase catalytic subunit (311 aa).

Carbamoyl phosphate is bound by residues R58 and T59. K86 contributes to the L-aspartate binding site. Carbamoyl phosphate contacts are provided by R108, H136, and Q139. L-aspartate is bound by residues R169 and R224. Positions 265 and 266 each coordinate carbamoyl phosphate.

This sequence belongs to the aspartate/ornithine carbamoyltransferase superfamily. ATCase family. In terms of assembly, heterododecamer (2C3:3R2) of six catalytic PyrB chains organized as two trimers (C3), and six regulatory PyrI chains organized as three dimers (R2).

It carries out the reaction carbamoyl phosphate + L-aspartate = N-carbamoyl-L-aspartate + phosphate + H(+). The protein operates within pyrimidine metabolism; UMP biosynthesis via de novo pathway; (S)-dihydroorotate from bicarbonate: step 2/3. Its function is as follows. Catalyzes the condensation of carbamoyl phosphate and aspartate to form carbamoyl aspartate and inorganic phosphate, the committed step in the de novo pyrimidine nucleotide biosynthesis pathway. This Geotalea uraniireducens (strain Rf4) (Geobacter uraniireducens) protein is Aspartate carbamoyltransferase catalytic subunit.